A 574-amino-acid chain; its full sequence is Serine hydroxymethyltransferase (574 aa).

(6S)-5,6,7,8-tetrahydrofolate is bound at residue 180–182 (GHL). Lysine 288 is subject to N6-(pyridoxal phosphate)lysine. Glutamate 306 lines the (6S)-5,6,7,8-tetrahydrofolate pocket.

It belongs to the SHMT family. Homodimer. The cofactor is pyridoxal 5'-phosphate.

The protein resides in the cytoplasm. It carries out the reaction (6R)-5,10-methylene-5,6,7,8-tetrahydrofolate + glycine + H2O = (6S)-5,6,7,8-tetrahydrofolate + L-serine. The protein operates within one-carbon metabolism; tetrahydrofolate interconversion. It functions in the pathway amino-acid biosynthesis; glycine biosynthesis; glycine from L-serine: step 1/1. Functionally, catalyzes the reversible interconversion of serine and glycine with tetrahydrofolate (THF) serving as the one-carbon carrier. This reaction serves as the major source of one-carbon groups required for the biosynthesis of purines, thymidylate, methionine, and other important biomolecules. Also exhibits THF-independent aldolase activity toward beta-hydroxyamino acids, producing glycine and aldehydes, via a retro-aldol mechanism. In Treponema pallidum (strain Nichols), this protein is Serine hydroxymethyltransferase.